The primary structure comprises 278 residues: Envelope glycoprotein L (278 aa).

A signal peptide spans 1 to 30; it reads MCRRPDCGFSFSPGPVILLWCCLLLPIVSS. The 214-residue stretch at 43–256 folds into the gL betaherpesvirus-type domain; that stretch reads VPAECPELTR…DKYYAGLPPE (214 aa). A disulfide bridge connects residues cysteine 154 and cysteine 159.

This sequence belongs to the herpesviridae glycoprotein L (gL) family. Betaherpesvirinae gL subfamily. In terms of assembly, interacts with glycoprotein H (gH); this interaction is necessary for the correct processing and cell surface expression of gH. Forms the envelope pentamer complex (PC) composed of gH, gL, UL128, UL130, and UL131A. The pentamer interacts with host NRP2. Forms the envelope trimer complex composed of gH, gL, and gO. The trimer interacts with host PDGFRA. The trimer also interacts with host EPHA2.

It localises to the virion membrane. Its subcellular location is the host cell membrane. It is found in the host Golgi apparatus. The protein resides in the host trans-Golgi network. Functionally, the heterodimer glycoprotein H-glycoprotein L is required for the fusion of viral and plasma membranes leading to virus entry into the host cell. Acts as a functional inhibitor of gH and maintains gH in an inhibited form. Upon binding to host integrins, gL dissociates from gH leading to activation of the viral fusion glycoproteins gB and gH. In human cytomegalovirus, forms two distincts complexes to mediate viral entry, a trimer and a pentamer at the surface of the virion envelope. The gH-gL-gO trimer is required for infection in fibroblasts by interacting with host PDGFRA, and in glioblastoma cells by interacting with host EPHA2. The gH-gL-UL128-UL130-UL131A pentamer is essential for viral entry in epithelial, endothelial and myeloid cells via interaction with host NRP2. The chain is Envelope glycoprotein L from Homo sapiens (Human).